The primary structure comprises 205 residues: Ribosomal RNA small subunit methyltransferase G 1 (205 aa).

Residues glycine 77, leucine 82, 100–102, 129–130, and arginine 138 each bind S-adenosyl-L-methionine; these read EKS and LE.

This sequence belongs to the methyltransferase superfamily. RNA methyltransferase RsmG family.

The protein resides in the cytoplasm. The enzyme catalyses guanosine(527) in 16S rRNA + S-adenosyl-L-methionine = N(7)-methylguanosine(527) in 16S rRNA + S-adenosyl-L-homocysteine. In terms of biological role, specifically methylates the N7 position of guanine in position 527 of 16S rRNA. In Bdellovibrio bacteriovorus (strain ATCC 15356 / DSM 50701 / NCIMB 9529 / HD100), this protein is Ribosomal RNA small subunit methyltransferase G 1.